We begin with the raw amino-acid sequence, 456 residues long: 1,3-beta-glucanosyltransferase gas4 (456 aa).

The N-terminal stretch at 1–25 (MGVANIIYALFLLGPSIFLKATAQT) is a signal peptide. A disulfide bridge links cysteine 68 with cysteine 97. (1,3-beta-D-glucosyl)n is bound by residues tyrosine 86, asparagine 156, glutamate 157, aspartate 197, and arginine 202. The active-site Proton donor is glutamate 157. 2 disulfide bridges follow: cysteine 211–cysteine 350 and cysteine 229–cysteine 260. A glycan (N-linked (GlcNAc...) asparagine) is linked at asparagine 248. The Nucleophile role is filled by glutamate 257. (1,3-beta-D-glucosyl)n is bound at residue tyrosine 296. Disordered stretches follow at residues 334–353 (NPKG…CPAN) and 384–434 (IEGP…ESGS). Asparagine 353 and asparagine 415 each carry an N-linked (GlcNAc...) asparagine glycan. Residues 417-434 (TSTTSYTSGMTSSSESGS) show a composition bias toward low complexity. A lipid anchor (GPI-anchor amidated serine) is attached at serine 432. Positions 433-456 (GSSKIGVAFCQALFITVLIATLSF) are cleaved as a propeptide — removed in mature form.

This sequence belongs to the glycosyl hydrolase 72 family.

It is found in the cell membrane. In terms of biological role, splits internally a 1,3-beta-glucan molecule and transfers the newly generated reducing end (the donor) to the non-reducing end of another 1,3-beta-glucan molecule (the acceptor) forming a 1,3-beta linkage, resulting in the elongation of 1,3-beta-glucan chains in the cell wall. Involved in spore wall assembly. The protein is 1,3-beta-glucanosyltransferase gas4 (gas4) of Schizosaccharomyces pombe (strain 972 / ATCC 24843) (Fission yeast).